The sequence spans 337 residues: Aspartate-semialdehyde dehydrogenase 2 (337 aa).

NADP(+) contacts are provided by residues 13–16 and 41–42; these read TGAV and RS. Arg-101 lines the phosphate pocket. Cys-132 serves as the catalytic Acyl-thioester intermediate. Gln-159 provides a ligand contact to substrate. 162–163 is a binding site for NADP(+); the sequence is SG. Lys-216 contributes to the phosphate binding site. Arg-238 provides a ligand contact to substrate. His-245 serves as the catalytic Proton acceptor. Asn-316 is an NADP(+) binding site.

Belongs to the aspartate-semialdehyde dehydrogenase family. In terms of assembly, homodimer.

It catalyses the reaction L-aspartate 4-semialdehyde + phosphate + NADP(+) = 4-phospho-L-aspartate + NADPH + H(+). It functions in the pathway amino-acid biosynthesis; L-lysine biosynthesis via DAP pathway; (S)-tetrahydrodipicolinate from L-aspartate: step 2/4. It participates in amino-acid biosynthesis; L-methionine biosynthesis via de novo pathway; L-homoserine from L-aspartate: step 2/3. The protein operates within amino-acid biosynthesis; L-threonine biosynthesis; L-threonine from L-aspartate: step 2/5. Its function is as follows. Catalyzes the NADPH-dependent formation of L-aspartate-semialdehyde (L-ASA) by the reductive dephosphorylation of L-aspartyl-4-phosphate. This is Aspartate-semialdehyde dehydrogenase 2 (asd2) from Vibrio cholerae serotype O1 (strain ATCC 39315 / El Tor Inaba N16961).